Consider the following 258-residue polypeptide: Imidazole glycerol phosphate synthase subunit HisF (258 aa).

Active-site residues include Asp12 and Asp131.

It belongs to the HisA/HisF family. In terms of assembly, heterodimer of HisH and HisF.

It is found in the cytoplasm. It catalyses the reaction 5-[(5-phospho-1-deoxy-D-ribulos-1-ylimino)methylamino]-1-(5-phospho-beta-D-ribosyl)imidazole-4-carboxamide + L-glutamine = D-erythro-1-(imidazol-4-yl)glycerol 3-phosphate + 5-amino-1-(5-phospho-beta-D-ribosyl)imidazole-4-carboxamide + L-glutamate + H(+). Its pathway is amino-acid biosynthesis; L-histidine biosynthesis; L-histidine from 5-phospho-alpha-D-ribose 1-diphosphate: step 5/9. Its function is as follows. IGPS catalyzes the conversion of PRFAR and glutamine to IGP, AICAR and glutamate. The HisF subunit catalyzes the cyclization activity that produces IGP and AICAR from PRFAR using the ammonia provided by the HisH subunit. The sequence is that of Imidazole glycerol phosphate synthase subunit HisF from Pseudarthrobacter chlorophenolicus (strain ATCC 700700 / DSM 12829 / CIP 107037 / JCM 12360 / KCTC 9906 / NCIMB 13794 / A6) (Arthrobacter chlorophenolicus).